A 333-amino-acid polypeptide reads, in one-letter code: MRSVSGQVVCVTGAGGFIASWLVKILLEKGYTVRGTVRNPDDPKNGHLRELEGAKERLTLCKADLLDYQSLREAINGCDGVFHTASPVTDDPEQMVEPAVIGTKNVINAAAEANVRRVVFTSSIGAVYMDPNRDPETVVDETCWSDPDFCKNTKNWYCYGKMVAEQAAWEEAKEKGVDLVVINPVLVQGPLLQTTVNASVLHILKYLTGSAKTYANSVQAYVDVKDVALAHILLYETPEASGRYLCAESVLHRGDVVEILSKFFPEYPIPTKCSDVTKPRVKPYKFSNQKLKDLGLEFTPVKQCLYETVKSLQEKGHLPIPTQKDEPIIRIQP.

Residues 13 to 19 (GAGGFIA), arginine 38, lysine 44, 64 to 65 (DL), 84 to 86 (TAS), tyrosine 157, lysine 161, 184 to 187 (PVLV), and serine 199 contribute to the NADP(+) site. The cysteines at positions 150 and 158 are disulfide-linked. Lysine 161 serves as the catalytic Proton donor.

The protein belongs to the NAD(P)-dependent epimerase/dehydratase family. Dihydroflavonol-4-reductase subfamily. The formation of a reversible disulfide bond reduces activity by perturbing the positioning of nearby catalytic residues. Expressed in flowers, leaves and stems.

Its subcellular location is the cytoplasm. The enzyme catalyses (E)-coniferaldehyde + NADP(+) + CoA = (E)-feruloyl-CoA + NADPH + H(+). It carries out the reaction (E)-4-coumaraldehyde + NADP(+) + CoA = (E)-4-coumaroyl-CoA + NADPH + H(+). It catalyses the reaction (E)-sinapaldehyde + NADP(+) + CoA = (E)-sinapoyl-CoA + NADPH + H(+). The catalysed reaction is (E)-cinnamaldehyde + NADP(+) + CoA = (E)-cinnamoyl-CoA + NADPH + H(+). It participates in aromatic compound metabolism; phenylpropanoid biosynthesis. Inhibited by sodium iodide-mediated oxidation. Its function is as follows. Involved in the latter stages of lignin biosynthesis. Catalyzes one of the last steps of monolignol biosynthesis, the conversion of cinnamoyl-CoAs into their corresponding cinnamaldehydes. Mediates the conversion of feruloyl CoA to coniferylaldehyde. Also active toward p-coumaroyl-CoA and sinapoyl-CoA. Involved in the production of floral volatile phenylpropanoids in flowers of fragrant cultivars (e.g. cv. Mitchell and cv. V26) from cinnamic acid, a common precursor with the anthocyanin biosynthesis pathway involved in flower pigmentation. This chain is Cinnamoyl-CoA reductase 1, found in Petunia hybrida (Petunia).